The chain runs to 292 residues: Elongation factor Ts (292 aa).

Positions 81-84 (TDFV) are involved in Mg(2+) ion dislocation from EF-Tu.

The protein belongs to the EF-Ts family.

It is found in the cytoplasm. Associates with the EF-Tu.GDP complex and induces the exchange of GDP to GTP. It remains bound to the aminoacyl-tRNA.EF-Tu.GTP complex up to the GTP hydrolysis stage on the ribosome. The chain is Elongation factor Ts from Alkalilimnicola ehrlichii (strain ATCC BAA-1101 / DSM 17681 / MLHE-1).